The chain runs to 475 residues: Ribosomal protein uS12 methylthiotransferase RimO (475 aa).

One can recognise an MTTase N-terminal domain in the interval 36–150 (NKINFISLGC…ILKAVQSTQK (115 aa)). The [4Fe-4S] cluster site is built by cysteine 45, cysteine 81, cysteine 113, cysteine 185, cysteine 189, and cysteine 192. The Radical SAM core domain occupies 171-403 (STPKHYAYLK…MQVQKKVVKK (233 aa)). The TRAM domain occupies 406-475 (KKMIGKKIAV…ADYDLVGHVI (70 aa)).

This sequence belongs to the methylthiotransferase family. RimO subfamily. [4Fe-4S] cluster is required as a cofactor.

It localises to the cytoplasm. The enzyme catalyses L-aspartate(89)-[ribosomal protein uS12]-hydrogen + (sulfur carrier)-SH + AH2 + 2 S-adenosyl-L-methionine = 3-methylsulfanyl-L-aspartate(89)-[ribosomal protein uS12]-hydrogen + (sulfur carrier)-H + 5'-deoxyadenosine + L-methionine + A + S-adenosyl-L-homocysteine + 2 H(+). In terms of biological role, catalyzes the methylthiolation of an aspartic acid residue of ribosomal protein uS12. This Protochlamydia amoebophila (strain UWE25) protein is Ribosomal protein uS12 methylthiotransferase RimO.